The chain runs to 403 residues: S-adenosylmethionine synthase (403 aa).

Residue histidine 15 coordinates ATP. Aspartate 17 contributes to the Mg(2+) binding site. Position 43 (glutamate 43) interacts with K(+). L-methionine contacts are provided by glutamate 56 and glutamine 99. A flexible loop region spans residues 99–109 (QSPDINQGVDR). ATP contacts are provided by residues 166–168 (DAK), 232–233 (KF), aspartate 241, 247–248 (RK), alanine 264, and lysine 268. L-methionine is bound at residue aspartate 241. Lysine 272 serves as a coordination point for L-methionine.

The protein belongs to the AdoMet synthase family. As to quaternary structure, homotetramer; dimer of dimers. The cofactor is Mg(2+). Requires K(+) as cofactor.

It localises to the cytoplasm. The enzyme catalyses L-methionine + ATP + H2O = S-adenosyl-L-methionine + phosphate + diphosphate. It participates in amino-acid biosynthesis; S-adenosyl-L-methionine biosynthesis; S-adenosyl-L-methionine from L-methionine: step 1/1. Catalyzes the formation of S-adenosylmethionine (AdoMet) from methionine and ATP. The overall synthetic reaction is composed of two sequential steps, AdoMet formation and the subsequent tripolyphosphate hydrolysis which occurs prior to release of AdoMet from the enzyme. This Xanthomonas campestris pv. campestris (strain 8004) protein is S-adenosylmethionine synthase.